The primary structure comprises 192 residues: MTIKKPTKEEAKEAVRTLLRFIGEDPNREGLFKTPDRVIKSYEEIFSGYGKNIEEILETKFSDTGNFQDFISLEGIKFTSFCEHHMLPFSGTVHIAYIPDNCIVGISKLARIVNAFAKRLQIQEKMTVQIAESVQENLKPLGVAVKISALHSCMSMRGVMQDNSIMNTMHYTGIFAEQQKYRHEFLNLTSKK.

The Zn(2+) site is built by Cys-82, His-85, and Cys-153.

The protein belongs to the GTP cyclohydrolase I family. As to quaternary structure, toroid-shaped homodecamer, composed of two pentamers of five dimers.

The catalysed reaction is GTP + H2O = 7,8-dihydroneopterin 3'-triphosphate + formate + H(+). The protein operates within cofactor biosynthesis; 7,8-dihydroneopterin triphosphate biosynthesis; 7,8-dihydroneopterin triphosphate from GTP: step 1/1. The chain is GTP cyclohydrolase 1 from Rickettsia bellii (strain OSU 85-389).